A 438-amino-acid polypeptide reads, in one-letter code: Gamma-glutamyl phosphate reductase (438 aa).

It belongs to the gamma-glutamyl phosphate reductase family.

Its subcellular location is the cytoplasm. The enzyme catalyses L-glutamate 5-semialdehyde + phosphate + NADP(+) = L-glutamyl 5-phosphate + NADPH + H(+). The protein operates within amino-acid biosynthesis; L-proline biosynthesis; L-glutamate 5-semialdehyde from L-glutamate: step 2/2. Functionally, catalyzes the NADPH-dependent reduction of L-glutamate 5-phosphate into L-glutamate 5-semialdehyde and phosphate. The product spontaneously undergoes cyclization to form 1-pyrroline-5-carboxylate. The polypeptide is Gamma-glutamyl phosphate reductase (Prochlorococcus marinus (strain MIT 9313)).